A 473-amino-acid chain; its full sequence is Bifunctional protein GlmU (473 aa).

Residues 1–226 are pyrophosphorylase; that stretch reads MRAPVAVVIL…AGEASGINDL (226 aa). UDP-N-acetyl-alpha-D-glucosamine is bound by residues 10–13, Lys24, Gln75, 80–81, 102–104, Gly136, Glu151, Asn166, and Asn224; these read LAAG, GT, and YGD. Asp104 is a Mg(2+) binding site. Position 224 (Asn224) interacts with Mg(2+). Positions 227-247 are linker; that stretch reads VQLAEVEEAFQRRWARRLLQG. The N-acetyltransferase stretch occupies residues 248–473; sequence GLRLVAPHRF…TPASGGAKEE (226 aa). Positions 330 and 348 each coordinate UDP-N-acetyl-alpha-D-glucosamine. Residue His360 is the Proton acceptor of the active site. Tyr363 and Asn374 together coordinate UDP-N-acetyl-alpha-D-glucosamine. Acetyl-CoA contacts are provided by residues Ala377, 383 to 384, Ser402, Ala420, and Arg437; that span reads NY. The disordered stretch occupies residues 439–473; it reads RARTIPGWQHPGLTGRRGPPDDNDATPASGGAKEE.

This sequence in the N-terminal section; belongs to the N-acetylglucosamine-1-phosphate uridyltransferase family. The protein in the C-terminal section; belongs to the transferase hexapeptide repeat family. As to quaternary structure, homotrimer. Mg(2+) serves as cofactor.

It localises to the cytoplasm. The enzyme catalyses alpha-D-glucosamine 1-phosphate + acetyl-CoA = N-acetyl-alpha-D-glucosamine 1-phosphate + CoA + H(+). It carries out the reaction N-acetyl-alpha-D-glucosamine 1-phosphate + UTP + H(+) = UDP-N-acetyl-alpha-D-glucosamine + diphosphate. The protein operates within nucleotide-sugar biosynthesis; UDP-N-acetyl-alpha-D-glucosamine biosynthesis; N-acetyl-alpha-D-glucosamine 1-phosphate from alpha-D-glucosamine 6-phosphate (route II): step 2/2. It functions in the pathway nucleotide-sugar biosynthesis; UDP-N-acetyl-alpha-D-glucosamine biosynthesis; UDP-N-acetyl-alpha-D-glucosamine from N-acetyl-alpha-D-glucosamine 1-phosphate: step 1/1. Its pathway is bacterial outer membrane biogenesis; LPS lipid A biosynthesis. Functionally, catalyzes the last two sequential reactions in the de novo biosynthetic pathway for UDP-N-acetylglucosamine (UDP-GlcNAc). The C-terminal domain catalyzes the transfer of acetyl group from acetyl coenzyme A to glucosamine-1-phosphate (GlcN-1-P) to produce N-acetylglucosamine-1-phosphate (GlcNAc-1-P), which is converted into UDP-GlcNAc by the transfer of uridine 5-monophosphate (from uridine 5-triphosphate), a reaction catalyzed by the N-terminal domain. This chain is Bifunctional protein GlmU, found in Halorhodospira halophila (strain DSM 244 / SL1) (Ectothiorhodospira halophila (strain DSM 244 / SL1)).